The following is a 1785-amino-acid chain: Mellein synthase (1785 aa).

A disordered region spans residues 1-36 (MATPDDPATPALSLSASNSSSPTAASSVPPPTGTSE). The span at 8 to 27 (ATPALSLSASNSSSPTAASS) shows a compositional bias: low complexity. The Ketosynthase family 3 (KS3) domain occupies 39–464 (YDDVAIIGMS…GTVSHAIIEQ (426 aa)). Catalysis depends on for beta-ketoacyl synthase activity residues Cys-211, His-346, and His-386. The tract at residues 575–888 (VWVFSGHGSH…AVAQLWTKGV (314 aa)) is malonyl-CoA:ACP transacylase (MAT) domain. Residue Ser-661 is the For malonyltransferase activity of the active site. The N-terminal hotdog fold stretch occupies residues 933 to 1047 (NNMLGQRMVV…ASWENEPSAN (115 aa)). The PKS/mFAS DH domain occupies 933 to 1206 (NNMLGQRMVV…FTEVEATPTK (274 aa)). Positions 935–1203 (MLGQRMVVAG…SIRFTEVEAT (269 aa)) are dehydratase (DH) domain. His-965 serves as the catalytic Proton acceptor; for dehydratase activity. The segment at 1062 to 1206 (GTRVSETFSV…FTEVEATPTK (145 aa)) is C-terminal hotdog fold. Asp-1123 (proton donor; for dehydratase activity) is an active-site residue. Positions 1418-1608 (GTYVLTGGLG…AIAFQWTAWR (191 aa)) are ketoreductase (KR) domain. Over residues 1681–1698 (QDQSAPASGNASDSSGRP) the composition is skewed to polar residues. Residues 1681–1701 (QDQSAPASGNASDSSGRPTAS) form a disordered region. One can recognise a Carrier domain in the interval 1706 to 1781 (PWLDVKIREC…AMVGWFQKQF (76 aa)). Ser-1741 carries the post-translational modification O-(pantetheine 4'-phosphoryl)serine.

The protein operates within secondary metabolite biosynthesis. Polyketide synthase that produces (R)-mellein, a secondary metabolite that inhibits the germination of wheat (Triticum aestivum) and barrel medic (Medicago truncatula) seeds. Condensates 1 acetate starter unit and 4 extender malonate units. The nascent pentaketide intermediate then undergoes an aldol cyclization and is aromatized via dehydration. The (R)-O-methylmellein isolated from P.nodorum is most likely to be derived from (R)-mellein via an additional methylation at the hydroxyl group. Interestingly, no O-methyltransferase gene is encoded in the vicinity of MLNS on the chromosome. Thus, the O-methylation is likely to be catalyzed by an endogenous O-methyltransferase encoded elsewhere in the genome of P.nodorum. This is Mellein synthase from Phaeosphaeria nodorum (strain SN15 / ATCC MYA-4574 / FGSC 10173) (Glume blotch fungus).